We begin with the raw amino-acid sequence, 94 residues long: Integration host factor subunit beta (94 aa).

The protein belongs to the bacterial histone-like protein family. In terms of assembly, heterodimer of an alpha and a beta chain.

Its function is as follows. This protein is one of the two subunits of integration host factor, a specific DNA-binding protein that functions in genetic recombination as well as in transcriptional and translational control. This is Integration host factor subunit beta from Haemophilus influenzae (strain PittGG).